Here is a 335-residue protein sequence, read N- to C-terminus: Ketol-acid reductoisomerase (NADP(+)) 2 (335 aa).

Residues 1 to 180 (MKTYYEQDAN…GCTRAGVIET (180 aa)) form the KARI N-terminal Rossmann domain. NADP(+)-binding positions include 24 to 27 (YGSQ), Arg47, Ser51, and 81 to 84 (DEQQ). His106 is a catalytic residue. Gly132 contributes to the NADP(+) binding site. The 146-residue stretch at 181–326 (TFQEETETDL…EELREMMSWI (146 aa)) folds into the KARI C-terminal knotted domain. Asp189, Glu193, Glu225, and Glu229 together coordinate Mg(2+). Position 250 (Ser250) interacts with substrate.

This sequence belongs to the ketol-acid reductoisomerase family. It depends on Mg(2+) as a cofactor.

The catalysed reaction is (2R)-2,3-dihydroxy-3-methylbutanoate + NADP(+) = (2S)-2-acetolactate + NADPH + H(+). It carries out the reaction (2R,3R)-2,3-dihydroxy-3-methylpentanoate + NADP(+) = (S)-2-ethyl-2-hydroxy-3-oxobutanoate + NADPH + H(+). The protein operates within amino-acid biosynthesis; L-isoleucine biosynthesis; L-isoleucine from 2-oxobutanoate: step 2/4. It functions in the pathway amino-acid biosynthesis; L-valine biosynthesis; L-valine from pyruvate: step 2/4. In terms of biological role, involved in the biosynthesis of branched-chain amino acids (BCAA). Catalyzes an alkyl-migration followed by a ketol-acid reduction of (S)-2-acetolactate (S2AL) to yield (R)-2,3-dihydroxy-isovalerate. In the isomerase reaction, S2AL is rearranged via a Mg-dependent methyl migration to produce 3-hydroxy-3-methyl-2-ketobutyrate (HMKB). In the reductase reaction, this 2-ketoacid undergoes a metal-dependent reduction by NADPH to yield (R)-2,3-dihydroxy-isovalerate. The chain is Ketol-acid reductoisomerase (NADP(+)) 2 from Bacillus thuringiensis subsp. konkukian (strain 97-27).